A 34-amino-acid chain; its full sequence is Phospholipase A2 (34 aa).

Residue histidine 18 is part of the active site. A Ca(2+)-binding site is contributed by aspartate 19.

Belongs to the phospholipase A2 family. Group I subfamily. D49 sub-subfamily. Ca(2+) serves as cofactor. In terms of processing, contains 7 disulfide bonds. In terms of tissue distribution, expressed by the venom gland.

The protein localises to the secreted. The catalysed reaction is a 1,2-diacyl-sn-glycero-3-phosphocholine + H2O = a 1-acyl-sn-glycero-3-phosphocholine + a fatty acid + H(+). Its function is as follows. Snake venom phospholipase A2 (PLA2) that strongly inhibits platelet aggregation and has a strong anticoagulant activity. PLA2 catalyzes the calcium-dependent hydrolysis of the 2-acyl groups in 3-sn-phosphoglycerides. In Pseudechis papuanus (Papuan black snake), this protein is Phospholipase A2.